Here is an 800-residue protein sequence, read N- to C-terminus: Chondroitin sulfate synthase 1 (800 aa).

At 1-7 the chain is on the cytoplasmic side; it reads MAARGRR. A helical; Signal-anchor for type II membrane protein transmembrane segment spans residues 8-28; the sequence is AWLSMLLGLVLGFVLASRLVL. Topologically, residues 29-800 are lumenal; it reads PRASELKRVG…GGSHGSARTA (772 aa). The disordered stretch occupies residues 36-66; the sequence is RVGPRRRPSPEGCRPGQEASQPGGARGDARG. Residues asparagine 188 and asparagine 622 are each glycosylated (N-linked (GlcNAc...) asparagine). A divalent metal cation-binding residues include aspartate 632 and histidine 746.

Belongs to the chondroitin N-acetylgalactosaminyltransferase family. It depends on Co(2+) as a cofactor. Requires Mn(2+) as cofactor. Cd(2+) is required as a cofactor.

It is found in the golgi apparatus. The protein resides in the golgi stack membrane. The protein localises to the secreted. The catalysed reaction is 3-O-(beta-D-GlcA-(1-&gt;3)-beta-D-GalNAc-(1-&gt;4)-beta-D-GlcA-(1-&gt;3)-beta-D-Gal-(1-&gt;3)-beta-D-Gal-(1-&gt;4)-beta-D-Xyl)-L-seryl-[protein] + UDP-N-acetyl-alpha-D-galactosamine = 3-O-(beta-D-GalNAc-(1-&gt;4)-beta-D-GlcA-(1-&gt;3)-beta-D-GalNAc-(1-&gt;4)-beta-D-GlcA-(1-&gt;3)-beta-D-Gal-(1-&gt;3)-beta-D-Gal-(1-&gt;4)-beta-D-Xyl)-L-seryl-[protein] + UDP + H(+). It carries out the reaction 3-O-{beta-D-GlcA-(1-&gt;3)-[beta-D-GalNAc-(1-&gt;4)-beta-D-GlcA-(1-&gt;3)](n)-beta-D-GalNAc-(1-&gt;4)-beta-D-GlcA-(1-&gt;3)-beta-D-Gal-(1-&gt;3)-beta-D-Gal-(1-&gt;4)-beta-D-Xyl}-L-seryl-[protein] + UDP-N-acetyl-alpha-D-galactosamine = 3-O-{[beta-D-GalNAc-(1-&gt;4)-beta-D-GlcA-(1-&gt;3)](n+1)-beta-D-GalNAc-(1-&gt;4)-beta-D-GlcA-(1-&gt;3)-beta-D-Gal-(1-&gt;3)-beta-D-Gal-(1-&gt;4)-beta-D-Xyl}-L-seryl-[protein] + UDP + H(+). The enzyme catalyses 3-O-(beta-D-GalNAc-(1-&gt;4)-beta-D-GlcA-(1-&gt;3)-beta-D-Gal-(1-&gt;3)-beta-D-Gal-(1-&gt;4)-beta-D-Xyl)-L-seryl-[protein] + UDP-alpha-D-glucuronate = 3-O-(beta-D-GlcA-(1-&gt;3)-beta-D-GalNAc-(1-&gt;4)-beta-D-GlcA-(1-&gt;3)-beta-D-Gal-(1-&gt;3)-beta-D-Gal-(1-&gt;4)-beta-D-Xyl)-L-seryl-[protein] + UDP + H(+). It catalyses the reaction 3-O-{[beta-D-GalNAc-(1-&gt;4)-beta-D-GlcA-(1-&gt;3)](n)-beta-D-GalNAc-(1-&gt;4)-beta-D-GlcA-(1-&gt;3)-beta-D-Gal-(1-&gt;3)-beta-D-Gal-(1-&gt;4)-beta-D-Xyl}-L-seryl-[protein] + UDP-alpha-D-glucuronate = 3-O-{beta-D-GlcA-(1-&gt;3)-[beta-D-GalNAc-(1-&gt;4)-beta-D-GlcA-(1-&gt;3)](n)-beta-D-GalNAc-(1-&gt;4)-beta-D-GlcA-(1-&gt;3)-beta-D-Gal-(1-&gt;3)-beta-D-Gal-(1-&gt;4)-beta-D-Xyl}-L-seryl-[protein] + UDP + H(+). Has both beta-1,3-glucuronic acid and beta-1,4-N-acetylgalactosamine transferase activity. Transfers glucuronic acid (GlcUA) from UDP-GlcUA and N-acetylgalactosamine (GalNAc) from UDP-GalNAc to the non-reducing end of the elongating chondroitin polymer. Involved in the negative control of osteogenesis likely through the modulation of NOTCH signaling. The polypeptide is Chondroitin sulfate synthase 1 (Chsy1) (Mus musculus (Mouse)).